The sequence spans 160 residues: Adenosine 5'-monophosphoramidase HINT3 (160 aa).

Positions 24-132 constitute an HIT domain; that stretch reads IFCTIAKGDD…LAPYSQLYKW (109 aa). AMP contacts are provided by residues 50–51 and 119–121; these read DI and HLH. The short motif at 117–121 is the Histidine triad motif element; the sequence is HLHLH. The Tele-AMP-histidine intermediate role is filled by H119.

It belongs to the HINT family. In terms of assembly, forms dimers to octamers and even larger oligomer.

It localises to the cytoplasm. Its subcellular location is the nucleus. It catalyses the reaction adenosine 5'-phosphoramidate + H2O = AMP + NH4(+). Functionally, exhibits adenosine 5'-monophosphoramidase activity, hydrolyzing purine nucleotide phosphoramidates with a single phosphate group such as adenosine 5'monophosphoramidate (AMP-NH2) to yield AMP and NH2. Hydrolyzes lysyl-AMP (AMP-N-epsilon-(N-alpha-acetyl lysine methyl ester)) generated by lysine tRNA ligase. This Danio rerio (Zebrafish) protein is Adenosine 5'-monophosphoramidase HINT3 (hint3).